We begin with the raw amino-acid sequence, 658 residues long: Methionine--tRNA ligase (658 aa).

Residues 9 to 19 (PYANGKAHVGH) carry the 'HIGH' region motif. C140, C143, C152, and C156 together coordinate Zn(2+). Positions 322 to 326 (TFSKS) match the 'KMSKS' region motif. ATP is bound at residue K325. The 101-residue stretch at 558–658 (DFQKLDIRIG…KEVEPGTRVC (101 aa)) folds into the tRNA-binding domain.

It belongs to the class-I aminoacyl-tRNA synthetase family. MetG type 1 subfamily. In terms of assembly, homodimer. It depends on Zn(2+) as a cofactor.

The protein resides in the cytoplasm. It catalyses the reaction tRNA(Met) + L-methionine + ATP = L-methionyl-tRNA(Met) + AMP + diphosphate. Is required not only for elongation of protein synthesis but also for the initiation of all mRNA translation through initiator tRNA(fMet) aminoacylation. The protein is Methionine--tRNA ligase of Archaeoglobus fulgidus (strain ATCC 49558 / DSM 4304 / JCM 9628 / NBRC 100126 / VC-16).